We begin with the raw amino-acid sequence, 208 residues long: Small ribosomal subunit protein uS4 (208 aa).

The region spanning Arg98 to Ala160 is the S4 RNA-binding domain.

Belongs to the universal ribosomal protein uS4 family. Part of the 30S ribosomal subunit. Contacts protein S5. The interaction surface between S4 and S5 is involved in control of translational fidelity.

One of the primary rRNA binding proteins, it binds directly to 16S rRNA where it nucleates assembly of the body of the 30S subunit. Its function is as follows. With S5 and S12 plays an important role in translational accuracy. The polypeptide is Small ribosomal subunit protein uS4 (Nautilia profundicola (strain ATCC BAA-1463 / DSM 18972 / AmH)).